The primary structure comprises 278 residues: Probable cytochrome c oxidase subunit 3 (278 aa).

6 consecutive transmembrane segments (helical) span residues 21-41 (PWPV…VSFM), 46-66 (FNIY…YSWW), 89-109 (IGMA…FASF), 174-194 (CVTA…MQAY), 212-232 (FYLA…FLIV), and 256-276 (AWYW…VYIF).

This sequence belongs to the cytochrome c oxidase subunit 3 family.

The protein localises to the cell membrane. The enzyme catalyses 4 Fe(II)-[cytochrome c] + O2 + 8 H(+)(in) = 4 Fe(III)-[cytochrome c] + 2 H2O + 4 H(+)(out). This chain is Probable cytochrome c oxidase subunit 3 (ctaE), found in Rickettsia felis (strain ATCC VR-1525 / URRWXCal2) (Rickettsia azadi).